The following is a 361-amino-acid chain: Chorismate synthase (361 aa).

Positions 48 and 54 each coordinate NADP(+). Residues 125 to 127 (RSS), 240 to 241 (NA), Gly286, 301 to 305 (KPTSS), and Arg327 contribute to the FMN site.

It belongs to the chorismate synthase family. In terms of assembly, homotetramer. It depends on FMNH2 as a cofactor.

It carries out the reaction 5-O-(1-carboxyvinyl)-3-phosphoshikimate = chorismate + phosphate. It functions in the pathway metabolic intermediate biosynthesis; chorismate biosynthesis; chorismate from D-erythrose 4-phosphate and phosphoenolpyruvate: step 7/7. In terms of biological role, catalyzes the anti-1,4-elimination of the C-3 phosphate and the C-6 proR hydrogen from 5-enolpyruvylshikimate-3-phosphate (EPSP) to yield chorismate, which is the branch point compound that serves as the starting substrate for the three terminal pathways of aromatic amino acid biosynthesis. This reaction introduces a second double bond into the aromatic ring system. The protein is Chorismate synthase of Magnetococcus marinus (strain ATCC BAA-1437 / JCM 17883 / MC-1).